Consider the following 339-residue polypeptide: 7,8-didemethyl-8-hydroxy-5-deazariboflavin synthase (339 aa).

A Radical SAM core domain is found at 25-256 (ATYSPAYTIV…PDITIQIPPN (232 aa)). Positions 39, 43, and 46 each coordinate [4Fe-4S] cluster.

Belongs to the radical SAM superfamily. CofG family. As to quaternary structure, consists of two subunits, CofG and CofH. Requires [4Fe-4S] cluster as cofactor.

The catalysed reaction is 5-amino-5-(4-hydroxybenzyl)-6-(D-ribitylimino)-5,6-dihydrouracil + S-adenosyl-L-methionine = 7,8-didemethyl-8-hydroxy-5-deazariboflavin + 5'-deoxyadenosine + L-methionine + NH4(+) + H(+). The protein operates within cofactor biosynthesis; coenzyme F0 biosynthesis. Its function is as follows. Catalyzes the radical-mediated synthesis of 7,8-didemethyl-8-hydroxy-5-deazariboflavin from 5-amino-5-(4-hydroxybenzyl)-6-(D-ribitylimino)-5,6-dihydrouracil. The protein is 7,8-didemethyl-8-hydroxy-5-deazariboflavin synthase of Nostoc sp. (strain PCC 7120 / SAG 25.82 / UTEX 2576).